We begin with the raw amino-acid sequence, 461 residues long: Fumarate hydratase class II (461 aa).

Substrate-binding positions include 98 to 100, 129 to 132, 139 to 141, and T187; these read SGT, HPND, and SSN. The interval 120–140 is disordered; that stretch reads SKKGGKSPVHPNDHVNKGQSS. Catalysis depends on H188, which acts as the Proton donor/acceptor. Residue S318 is part of the active site. Substrate-binding positions include S319 and 324 to 326; that span reads KVN.

It belongs to the class-II fumarase/aspartase family. Fumarase subfamily. Homotetramer.

It is found in the cytoplasm. It catalyses the reaction (S)-malate = fumarate + H2O. It participates in carbohydrate metabolism; tricarboxylic acid cycle; (S)-malate from fumarate: step 1/1. Involved in the TCA cycle. Catalyzes the stereospecific interconversion of fumarate to L-malate. The protein is Fumarate hydratase class II of Rickettsia felis (strain ATCC VR-1525 / URRWXCal2) (Rickettsia azadi).